We begin with the raw amino-acid sequence, 230 residues long: Ubiquitin carboxyl-terminal hydrolase isozyme L3 (230 aa).

The region spanning 5 to 229 (RWLPLEANPE…LRFNAIALSA (225 aa)) is the UCH catalytic domain. The interaction with ubiquitin stretch occupies residues 8 to 13 (PLEANP). Catalysis depends on Cys95, which acts as the Nucleophile. Ser130 bears the Phosphoserine mark. Residues 152–159 (AHEGQTEA) form an interaction with ubiquitin. Crossover loop which restricts access of large ubiquitin adducts to the active site region. The active-site Proton donor is the His169. Positions 219 to 224 (ELRFNA) are interaction with ubiquitin.

Belongs to the peptidase C12 family. In terms of assembly, preferentially binds diubiquitin; the interaction does not hydrolyze diubiquitin but, in vitro, inhibits the hydrolyzing activity on other substrates.

The protein resides in the cytoplasm. The enzyme catalyses Thiol-dependent hydrolysis of ester, thioester, amide, peptide and isopeptide bonds formed by the C-terminal Gly of ubiquitin (a 76-residue protein attached to proteins as an intracellular targeting signal).. Its activity is regulated as follows. Inhibited by monoubiquitin and diubiquitin. Functionally, deubiquitinating enzyme (DUB) that controls levels of cellular ubiquitin through processing of ubiquitin precursors and ubiquitinated proteins. Thiol protease that recognizes and hydrolyzes a peptide bond at the C-terminal glycine of either ubiquitin or NEDD8. Has a 10-fold preference for Arg and Lys at position P3''. Deubiquitinates ENAC in apical compartments, thereby regulating apical membrane recycling. Indirectly increases the phosphorylation of IGFIR, AKT and FOXO1 and promotes insulin-signaling and insulin-induced adipogenesis. Required for stress-response retinal, skeletal muscle and germ cell maintenance. May be involved in working memory. Can hydrolyze UBB(+1), a mutated form of ubiquitin which is not effectively degraded by the proteasome. This Bos taurus (Bovine) protein is Ubiquitin carboxyl-terminal hydrolase isozyme L3 (UCHL3).